A 321-amino-acid polypeptide reads, in one-letter code: MSSPTKEGSDTAGNAHKNSENEPSNDCTTDIESPSADPNMIYQVETNSINREPGTATSQEDAVPQAAANTELETEIQKDQREEDIKEEPLLLQIPIPRKLISLMSELGRGNYLRILLVKIDQNKPLNDRSKSHSEKAEMKANNCPVNRKIRFRLSTSWRVPFINNHEIRSMILRLLCERYFSQAEECQDTMWVKQNYIACLYRPNSFTHHERTVIFRRPLRVRYHRPLTERMTSGKFCKSTDMKGKYRFRAIVRSVLFVSHVQLQSLFNRKGFVDILRYNHTRKVMIISTNNGWKYFCPICGRLFNTYFELRRHSCRSPGN.

Residues 1 to 83 (MSSPTKEGSD…TEIQKDQREE (83 aa)) are disordered. Composition is skewed to polar residues over residues 21 to 32 (NEPSNDCTTDIE) and 44 to 60 (VETNSINREPGTATSQE).

This chain is CPX chromosomal region candidate gene 1 protein homolog (CPXCR1), found in Macaca fascicularis (Crab-eating macaque).